We begin with the raw amino-acid sequence, 514 residues long: Na(+)/H(+) antiporter NhaB (514 aa).

The next 11 helical transmembrane spans lie at 21–41 (LAIV…SPFI), 43–63 (GWLL…CYPL), 88–108 (IMAN…IFFM), 143–163 (FLDA…FYGV), 203–223 (LMMH…VGEP), 239–259 (FFLR…LTCF), 304–324 (ALIA…VGLI), 349–369 (QESL…AVII), 390–410 (LALF…VFVA), 448–468 (ATPN…SPLI), and 484–504 (IVLS…ATIW).

The protein belongs to the NhaB Na(+)/H(+) (TC 2.A.34) antiporter family.

The protein localises to the cell inner membrane. It catalyses the reaction 2 Na(+)(in) + 3 H(+)(out) = 2 Na(+)(out) + 3 H(+)(in). In terms of biological role, na(+)/H(+) antiporter that extrudes sodium in exchange for external protons. This Haemophilus influenzae (strain ATCC 51907 / DSM 11121 / KW20 / Rd) protein is Na(+)/H(+) antiporter NhaB.